Here is a 240-residue protein sequence, read N- to C-terminus: Ribonuclease PH (240 aa).

Phosphate is bound by residues R87 and 125 to 127; that span reads GTR.

It belongs to the RNase PH family. As to quaternary structure, homohexameric ring arranged as a trimer of dimers.

It carries out the reaction tRNA(n+1) + phosphate = tRNA(n) + a ribonucleoside 5'-diphosphate. Phosphorolytic 3'-5' exoribonuclease that plays an important role in tRNA 3'-end maturation. Removes nucleotide residues following the 3'-CCA terminus of tRNAs; can also add nucleotides to the ends of RNA molecules by using nucleoside diphosphates as substrates, but this may not be physiologically important. Probably plays a role in initiation of 16S rRNA degradation (leading to ribosome degradation) during starvation. In Pseudomonas fluorescens (strain SBW25), this protein is Ribonuclease PH.